The primary structure comprises 442 residues: Testican-1 (442 aa).

The signal sequence occupies residues 1–21; the sequence is MPAIAVLAAAAAAWCFLQVDS. Intrachain disulfides connect Cys89–Cys100, Cys94–Cys110, Cys139–Cys169, Cys142–Cys162, Cys151–Cys183, Cys316–Cys340, Cys351–Cys358, and Cys360–Cys379. The 53-residue stretch at 133 to 185 folds into the Kazal-like domain; it reads PSNLVKCKPCPVAQSAMVCGSDGHTYTSKCKLEFHACSTGKSLNSLCDGPCPC. A Thyroglobulin type-1 domain is found at 313–379; that stretch reads GLPCQNEMNR…GSRKQGTVSC (67 aa). Disordered stretches follow at residues 375 to 395 and 420 to 442; these read GTVS…GGSV and TRAV…GYIW. Ser386 and Ser391 each carry an O-linked (Xyl...) (glycosaminoglycan) serine glycan. Positions 425–442 are enriched in acidic residues; sequence EDDEDEDDDKEDEVGYIW.

In terms of processing, contains chondroitin sulfate and heparan sulfate O-linked oligosaccharides. Predominantly expressed in the postsynaptic area of pyramidal neurons.

Its subcellular location is the secreted. The protein resides in the extracellular space. It is found in the extracellular matrix. Functionally, may play a role in cell-cell and cell-matrix interactions. May contribute to various neuronal mechanisms in the central nervous system. This is Testican-1 (Spock1) from Mus musculus (Mouse).